Here is a 194-residue protein sequence, read N- to C-terminus: UPF0301 protein CBU_2093 (194 aa).

Belongs to the UPF0301 (AlgH) family.

This chain is UPF0301 protein CBU_2093, found in Coxiella burnetii (strain RSA 493 / Nine Mile phase I).